We begin with the raw amino-acid sequence, 300 residues long: Cation-efflux pump FieF (300 aa).

Transmembrane regions (helical) follow at residues 12-32 (AALA…VAWY), 40-60 (LAAL…LLVV), 82-102 (AALA…LTGF), and 114-134 (PGVG…LVTY). Zn(2+)-binding residues include D45 and D49. The Zn(2+) site is built by H153 and D157. 2 helical membrane passes run 155–175 (QSDV…WYGF) and 178–198 (ADAL…LRMG).

The protein belongs to the cation diffusion facilitator (CDF) transporter (TC 2.A.4) family. FieF subfamily. As to quaternary structure, homodimer.

The protein resides in the cell inner membrane. It catalyses the reaction Zn(2+)(in) + H(+)(out) = Zn(2+)(out) + H(+)(in). The catalysed reaction is Cd(2+)(in) + H(+)(out) = Cd(2+)(out) + H(+)(in). The enzyme catalyses Fe(2+)(in) + H(+)(out) = Fe(2+)(out) + H(+)(in). Its function is as follows. Divalent metal cation transporter which exports Zn(2+), Cd(2+) and possibly Fe(2+). May be involved in zinc and iron detoxification by efflux. In Serratia proteamaculans (strain 568), this protein is Cation-efflux pump FieF.